A 422-amino-acid polypeptide reads, in one-letter code: Tk-subtilisin (422 aa).

Residues M1 to A24 form the signal peptide. Positions G25 to P106 are excised as a propeptide. In terms of domain architecture, Peptidase S8 spans P111–V417. Active-site charge relay system residues include D139, H177, and S348.

Belongs to the peptidase S8 family. As to quaternary structure, monomer. It depends on Ca(2+) as a cofactor.

The protein resides in the secreted. In terms of biological role, has a broad substrate specificity with a slight preference to large hydrophobic amino acid residues at the P1 position. The protein is Tk-subtilisin of Thermococcus kodakarensis (strain ATCC BAA-918 / JCM 12380 / KOD1) (Pyrococcus kodakaraensis (strain KOD1)).